We begin with the raw amino-acid sequence, 122 residues long: Small ribosomal subunit protein uS12 (122 aa).

3-methylthioaspartic acid is present on Asp89.

Belongs to the universal ribosomal protein uS12 family. Part of the 30S ribosomal subunit. Contacts proteins S8 and S17. May interact with IF1 in the 30S initiation complex.

Its function is as follows. With S4 and S5 plays an important role in translational accuracy. Functionally, interacts with and stabilizes bases of the 16S rRNA that are involved in tRNA selection in the A site and with the mRNA backbone. Located at the interface of the 30S and 50S subunits, it traverses the body of the 30S subunit contacting proteins on the other side and probably holding the rRNA structure together. The combined cluster of proteins S8, S12 and S17 appears to hold together the shoulder and platform of the 30S subunit. The polypeptide is Small ribosomal subunit protein uS12 (Corynebacterium glutamicum (strain R)).